A 230-amino-acid polypeptide reads, in one-letter code: Cytidylate kinase (230 aa).

An ATP-binding site is contributed by 13 to 21; it reads GPAGTGKSS.

It belongs to the cytidylate kinase family. Type 1 subfamily.

It localises to the cytoplasm. The catalysed reaction is CMP + ATP = CDP + ADP. The enzyme catalyses dCMP + ATP = dCDP + ADP. The protein is Cytidylate kinase of Mycobacterium tuberculosis (strain ATCC 25177 / H37Ra).